A 525-amino-acid polypeptide reads, in one-letter code: GMP synthase [glutamine-hydrolyzing] (525 aa).

In terms of domain architecture, Glutamine amidotransferase type-1 spans 9–207 (RILILDFGSQ…VRDICQCEAL (199 aa)). Cysteine 86 functions as the Nucleophile in the catalytic mechanism. Active-site residues include histidine 181 and glutamate 183. In terms of domain architecture, GMPS ATP-PPase spans 208–400 (WTPAKIIDDA…LGLPYDMLYR (193 aa)). 235 to 241 (SGGVDSS) lines the ATP pocket.

As to quaternary structure, homodimer.

It catalyses the reaction XMP + L-glutamine + ATP + H2O = GMP + L-glutamate + AMP + diphosphate + 2 H(+). The protein operates within purine metabolism; GMP biosynthesis; GMP from XMP (L-Gln route): step 1/1. Functionally, catalyzes the synthesis of GMP from XMP. This Shigella flexneri protein is GMP synthase [glutamine-hydrolyzing].